We begin with the raw amino-acid sequence, 988 residues long: Voltage-gated delayed rectifier potassium channel KCNH5 (988 aa).

Topologically, residues 1–217 (MPGGKRGLVA…LHYCAFKTTW (217 aa)) are cytoplasmic. The PAS domain maps to 14–86 (TFLENIVRRS…TIEKVRQTFD (73 aa)). One can recognise a PAC domain in the interval 91-143 (NCFEVLLYKKNRTPVWFYMQIAPIRNEHEKVVLFLCTFKDITLFKQPIEDDST). Residues 218–238 (DWVILILTFYTAIMVPYNVSF) traverse the membrane as a helical segment. The Extracellular segment spans residues 239-243 (KTKQN). Residues 244–264 (NIAWLVLDSVVDVIFLVDIVL) traverse the membrane as a helical segment. At 265 to 291 (NFHTTFVGPGGEVISDPKLIRMNYLKT) the chain is on the cytoplasmic side. Residues 292 to 312 (WFVIDLLSCLPYDIINAFENV) traverse the membrane as a helical segment. The Extracellular portion of the chain corresponds to 313–319 (DEGISSL). A helical; Voltage-sensor transmembrane segment spans residues 320–340 (FSSLKVVRLLRLGRVARKLDH). Over 341-346 (YLEYGA) the chain is Cytoplasmic. Residues 347 to 367 (AVLVLLVCVFGLVAHWLACIW) form a helical membrane-spanning segment. The Extracellular segment spans residues 368-419 (YSIGDYEVIDEVTNTIQIDSWLYQLALSIGTPYRYNTSAGIWEGGPSKDSLY). Residue Asn403 is glycosylated (N-linked (GlcNAc...) asparagine). The segment at residues 420 to 440 (VSSLYFTMTSLTTIGFGNIAP) is an intramembrane region (pore-forming). Residues 432–437 (TIGFGN) carry the Selectivity filter motif. Residues 441-446 (TTDVEK) lie on the Extracellular side of the membrane. The helical transmembrane segment at 447-467 (MFSVAMMMVGSLLYATIFGNV) threads the bilayer. Over 468–988 (TTIFQQMYAN…PESDKDEINF (521 aa)) the chain is Cytoplasmic. Residue 550 to 668 (AFRLASDGCL…SFSRNLTLTC (119 aa)) coordinates a nucleoside 3',5'-cyclic phosphate. The calmodulin-binding stretch occupies residues 704 to 715 (HPVRKLFQKFKQ). Residues 721 to 741 (IQGSAQSDPERSQLQVESRPL) form a disordered region. The segment covering 723 to 741 (GSAQSDPERSQLQVESRPL) has biased composition (polar residues). Lys785 is covalently cross-linked (Glycyl lysine isopeptide (Lys-Gly) (interchain with G-Cter in ubiquitin)). The disordered stretch occupies residues 838 to 893 (GLLSEDPKGSDSENSVTKNPLRKTDSCDSGITKSDLRLDKAGEARSPLEHSPSQAD). Basic and acidic residues predominate over residues 871–885 (SDLRLDKAGEARSPL). Residue Ser883 is modified to Phosphoserine. Positions 909–948 (TLQEVKHELKEDIQLLSCRMTALEKQVAEILKLLSEKSVP) are CAD (involved in subunit assembly).

It belongs to the potassium channel family. H (Eag) (TC 1.A.1.20) subfamily. Kv10.2/KCNH5 sub-subfamily. As to quaternary structure, homotetramer. The potassium channel is probably composed of a homo- or heterotetrameric complex of pore-forming alpha subunits that can associate with modulating beta subunits. Heteromultimer with KCNH1/EAG.

The protein resides in the membrane. It catalyses the reaction K(+)(in) = K(+)(out). In terms of biological role, pore-forming (alpha) subunit of a voltage-gated delayed rectifier potassium channel that mediates outward-rectifying potassium currents which, on depolarization, reaches a steady-state level and do not inactivate. The kinetic is characterized by a slow activation time course and a small voltage dependence of the activation time constants, therefore, starts to open at more negative voltages. The activation kinetics depend on the prepulse potential and external divalent cation concentration. The time course of activation is biphasic with a fast and a slowly activating current component. With negative prepulses, the current activation is delayed and slowed down several fold, whereas more positive prepulses speed up activation, therefore the activation rate depends on holding potential. This is Voltage-gated delayed rectifier potassium channel KCNH5 from Mus musculus (Mouse).